The following is a 461-amino-acid chain: Cysteine--tRNA ligase (461 aa).

Cysteine 28 contributes to the Zn(2+) binding site. The 'HIGH' region signature appears at 30–40 (ITVYDLCHIGH). Positions 209, 234, and 238 each coordinate Zn(2+). The short motif at 266 to 270 (KMSKS) is the 'KMSKS' region element. Lysine 269 provides a ligand contact to ATP.

This sequence belongs to the class-I aminoacyl-tRNA synthetase family. In terms of assembly, monomer. Zn(2+) serves as cofactor.

Its subcellular location is the cytoplasm. It carries out the reaction tRNA(Cys) + L-cysteine + ATP = L-cysteinyl-tRNA(Cys) + AMP + diphosphate. The chain is Cysteine--tRNA ligase from Shigella sonnei (strain Ss046).